A 469-amino-acid polypeptide reads, in one-letter code: Cysteine--tRNA ligase (469 aa).

Cysteine 28 contributes to the Zn(2+) binding site. Residues 30 to 40 carry the 'HIGH' region motif; it reads CTVYDLCHIGH. Zn(2+) contacts are provided by cysteine 216, histidine 241, and glutamate 245. The short motif at 273–277 is the 'KMSKS' region element; the sequence is KMSKS. Lysine 276 contacts ATP.

Belongs to the class-I aminoacyl-tRNA synthetase family. As to quaternary structure, monomer. Requires Zn(2+) as cofactor.

The protein resides in the cytoplasm. It carries out the reaction tRNA(Cys) + L-cysteine + ATP = L-cysteinyl-tRNA(Cys) + AMP + diphosphate. The sequence is that of Cysteine--tRNA ligase from Colwellia psychrerythraea (strain 34H / ATCC BAA-681) (Vibrio psychroerythus).